The chain runs to 204 residues: DNA-binding transcriptional activator EvgA (204 aa).

The Response regulatory domain maps to 2 to 117; the sequence is NAIIIDDHPL…NIIAAIEAAK (116 aa). Asp-52 is modified (4-aspartylphosphate). Residues 137-202 form the HTH luxR-type domain; the sequence is DQQKLDSLSK…DLYTFAQRNK (66 aa). The H-T-H motif DNA-binding region spans 161–180; that stretch reads NNDIAEKMFISNKTVSTYKS.

As to quaternary structure, homodimer. Phosphorylated by EvgS.

The protein resides in the cytoplasm. Functionally, member of the two-component regulatory system EvgS/EvgA. Regulates the expression of emrKY operon and yfdX. Also seems to control expression of at least one other multidrug efflux operon. This Escherichia coli O157:H7 protein is DNA-binding transcriptional activator EvgA (evgA).